The primary structure comprises 236 residues: Chaperone protein TorD (236 aa).

It belongs to the TorD/DmsD family. TorD subfamily.

Its subcellular location is the cytoplasm. Functionally, involved in the biogenesis of TorA. Acts on TorA before the insertion of the molybdenum cofactor and, as a result, probably favors a conformation of the apoenzyme that is competent for acquiring the cofactor. This Colwellia psychrerythraea (strain 34H / ATCC BAA-681) (Vibrio psychroerythus) protein is Chaperone protein TorD.